Consider the following 156-residue polypeptide: Small ribosomal subunit protein uS7 (156 aa).

Belongs to the universal ribosomal protein uS7 family. As to quaternary structure, part of the 30S ribosomal subunit. Contacts proteins S9 and S11.

One of the primary rRNA binding proteins, it binds directly to 16S rRNA where it nucleates assembly of the head domain of the 30S subunit. Is located at the subunit interface close to the decoding center, probably blocks exit of the E-site tRNA. The protein is Small ribosomal subunit protein uS7 of Leuconostoc mesenteroides subsp. mesenteroides (strain ATCC 8293 / DSM 20343 / BCRC 11652 / CCM 1803 / JCM 6124 / NCDO 523 / NBRC 100496 / NCIMB 8023 / NCTC 12954 / NRRL B-1118 / 37Y).